Consider the following 178-residue polypeptide: Cytochrome b6-f complex iron-sulfur subunit (178 aa).

The helical transmembrane segment at 20 to 42 threads the bilayer; it reads LLTFGTATGVALGALYPVANYFM. Residues 65–161 form the Rieske domain; sequence KTGWLATHQA…VDIEDDAVLV (97 aa). Cys-107, His-109, Cys-125, and His-128 together coordinate [2Fe-2S] cluster. A disulfide bridge links Cys-112 with Cys-127.

It belongs to the Rieske iron-sulfur protein family. As to quaternary structure, the 4 large subunits of the cytochrome b6-f complex are cytochrome b6, subunit IV (17 kDa polypeptide, PetD), cytochrome f and the Rieske protein, while the 4 small subunits are PetG, PetL, PetM and PetN. The complex functions as a dimer. The cofactor is [2Fe-2S] cluster.

Its subcellular location is the cellular thylakoid membrane. The enzyme catalyses 2 oxidized [plastocyanin] + a plastoquinol + 2 H(+)(in) = 2 reduced [plastocyanin] + a plastoquinone + 4 H(+)(out). Component of the cytochrome b6-f complex, which mediates electron transfer between photosystem II (PSII) and photosystem I (PSI), cyclic electron flow around PSI, and state transitions. The chain is Cytochrome b6-f complex iron-sulfur subunit from Prochlorococcus marinus (strain MIT 9301).